We begin with the raw amino-acid sequence, 228 residues long: Cytidylate kinase (228 aa).

17-25 (GPTASGKGT) lines the ATP pocket.

Belongs to the cytidylate kinase family. Type 1 subfamily.

It localises to the cytoplasm. It carries out the reaction CMP + ATP = CDP + ADP. The enzyme catalyses dCMP + ATP = dCDP + ADP. The protein is Cytidylate kinase of Burkholderia pseudomallei (strain 1106a).